The sequence spans 481 residues: MSTTPQMSQSGFQDDQLEAGAREDVGTEAQEKPLSTTGTMVDEPQPNPNVVDWDGPDDPQHPLNWSKAQKNLHVGIVSLSTLAANLAATMFAPGAAELSDEFNITSATVTAMTVSLYVLGFALGPLLLAPLSELYGRLIIYHFCNMVYMAFTIGCAFSTNVAMFLVFRIIAGCAASGPMSIGGGTVADLFVQEQRGKAMALFAVGPLLGPVIGPIIGGFVSENVGWRWTFRILLILSGILATVTFALMKETNYTVILQKKALRMRKETGNEKLVAKSSRDETAGQMLARAIVRPLKLLIFSPIVLLVSLYTGILFGLIFLLFTTFPSVFQDVDKLLGSKKGEENAAPRPEDRLLLMKWLGPITPLGLFIYGWTAENRVHWIVPIIGTFIVGFGSLFVVIPGQIYLVDAFGAEAAASAMAANLLVRSPFGAFLDLTAEPLYSKLGLGWGNSVLGFITLAFTPVPWIFYTYGERLRTHFQVDL.

A compositionally biased stretch (polar residues) spans 1-13; sequence MSTTPQMSQSGFQ. The segment at 1–63 is disordered; that stretch reads MSTTPQMSQS…DGPDDPQHPL (63 aa). The span at 20 to 31 shows a compositional bias: basic and acidic residues; sequence GAREDVGTEAQE. Asn64 carries N-linked (GlcNAc...) asparagine glycosylation. Residues 72–92 traverse the membrane as a helical segment; sequence LHVGIVSLSTLAANLAATMFA. N-linked (GlcNAc...) asparagine glycosylation is present at Asn103. Helical transmembrane passes span 111 to 131, 147 to 167, 169 to 189, 200 to 220, and 228 to 248; these read AMTV…LAPL, VYMA…FLVF, IIAG…VADL, ALFA…GGFV, and WTFR…FALM. Asn252 is a glycosylation site (N-linked (GlcNAc...) asparagine). 5 helical membrane passes run 302-322, 353-373, 380-400, 403-423, and 446-466; these read PIVL…FLLF, LLLM…YGWT, WIVP…VVIP, IYLV…ANLL, and GWGN…PWIF.

The protein belongs to the major facilitator superfamily.

The protein resides in the cell membrane. Efflux pump required for efficient secretion of trichosetin or other secondary metabolies produced by the trichosetin gene cluster. Plays a crucial role in detoxification of the toxic trichosetin in Gibberella fujikuroi cells. This chain is Trichosetin biosynthesis cluster MFS transporter, found in Gibberella fujikuroi (strain CBS 195.34 / IMI 58289 / NRRL A-6831) (Bakanae and foot rot disease fungus).